The primary structure comprises 367 residues: GPN-loop GTPase 1 (367 aa).

GTP contacts are provided by residues 15–22 (GMAGSGKT) and 18–23 (GSGKTT). The Gly-Pro-Asn (GPN)-loop; involved in dimer interface signature appears at 75–77 (GPN). 178 to 181 (NKCD) provides a ligand contact to GTP. Residues 247–290 (EGMDDFLEAVKAKVKEYEEEYVPEMERMKEIQRQTKERQKEAQL) adopt a coiled-coil conformation. The tract at residues 306–332 (VGLTVSDAEDEYNGELVDPDEDDGLTA) is disordered. Phosphoserine is present on Ser-311. Positions 312–332 (DAEDEYNGELVDPDEDDGLTA) are enriched in acidic residues.

The protein belongs to the GPN-loop GTPase family. In terms of assembly, heterodimers with gpn2 or fet5/gpn3. Binds to RNA polymerase II (RNAPII).

The protein resides in the cytoplasm. In terms of biological role, small GTPase required for proper nuclear import of RNA polymerase II (RNAPII). May act at an RNAP assembly step prior to nuclear import. This is GPN-loop GTPase 1 from Schizosaccharomyces pombe (strain 972 / ATCC 24843) (Fission yeast).